The chain runs to 275 residues: Diaminopimelate epimerase (275 aa).

Residues asparagine 12, glutamine 45, and asparagine 65 each coordinate substrate. The active-site Proton donor is cysteine 74. Residues 75–76, asparagine 158, asparagine 191, and 209–210 contribute to the substrate site; these read GN and ER. Catalysis depends on cysteine 218, which acts as the Proton acceptor. Residue 219–220 coordinates substrate; the sequence is GT.

It belongs to the diaminopimelate epimerase family. As to quaternary structure, homodimer.

It is found in the cytoplasm. The catalysed reaction is (2S,6S)-2,6-diaminopimelate = meso-2,6-diaminopimelate. It participates in amino-acid biosynthesis; L-lysine biosynthesis via DAP pathway; DL-2,6-diaminopimelate from LL-2,6-diaminopimelate: step 1/1. Catalyzes the stereoinversion of LL-2,6-diaminopimelate (L,L-DAP) to meso-diaminopimelate (meso-DAP), a precursor of L-lysine and an essential component of the bacterial peptidoglycan. In Shewanella frigidimarina (strain NCIMB 400), this protein is Diaminopimelate epimerase.